Here is a 278-residue protein sequence, read N- to C-terminus: Large ribosomal subunit protein uL2 (278 aa).

Positions 226–278 are disordered; that stretch reads MNPIDHPHGGGEGKTAAGRHPVSPWGTPSKGSRTRKNKRTSNMIVRSRYSKKG.

It belongs to the universal ribosomal protein uL2 family. Part of the 50S ribosomal subunit. Forms a bridge to the 30S subunit in the 70S ribosome.

Its function is as follows. One of the primary rRNA binding proteins. Required for association of the 30S and 50S subunits to form the 70S ribosome, for tRNA binding and peptide bond formation. It has been suggested to have peptidyltransferase activity; this is somewhat controversial. Makes several contacts with the 16S rRNA in the 70S ribosome. In Nitrosomonas europaea (strain ATCC 19718 / CIP 103999 / KCTC 2705 / NBRC 14298), this protein is Large ribosomal subunit protein uL2.